The sequence spans 600 residues: Arginine--tRNA ligase (600 aa).

L-arginine-binding positions include 151–153 (SPN), His-162, Tyr-332, Asp-336, and Gln-360. The short motif at 152–162 (PNIAKEMHIGH) is the 'HIGH' region element.

It belongs to the class-I aminoacyl-tRNA synthetase family.

The enzyme catalyses tRNA(Arg) + L-arginine + ATP = L-arginyl-tRNA(Arg) + AMP + diphosphate. The chain is Arginine--tRNA ligase (RARS) from Acanthamoeba polyphaga mimivirus (APMV).